A 182-amino-acid chain; its full sequence is Biotin carboxyl carrier protein of acetyl-CoA carboxylase (182 aa).

The tract at residues alanine 70–proline 95 is disordered. Residues leucine 104–lysine 180 enclose the Biotinyl-binding domain. Lysine 146 is subject to N6-biotinyllysine.

In terms of assembly, homodimer.

It functions in the pathway lipid metabolism; fatty acid biosynthesis. Its function is as follows. This protein is a component of the acetyl coenzyme A carboxylase complex; first, biotin carboxylase catalyzes the carboxylation of the carrier protein and then the transcarboxylase transfers the carboxyl group to form malonyl-CoA. This chain is Biotin carboxyl carrier protein of acetyl-CoA carboxylase (accB), found in Nostoc sp. (strain PCC 7120 / SAG 25.82 / UTEX 2576).